The chain runs to 120 residues: Large ribosomal subunit protein eL18 (120 aa).

This sequence belongs to the eukaryotic ribosomal protein eL18 family.

The chain is Large ribosomal subunit protein eL18 from Thermoplasma acidophilum (strain ATCC 25905 / DSM 1728 / JCM 9062 / NBRC 15155 / AMRC-C165).